The chain runs to 214 residues: Homeobox protein HEX homolog pha-2 (214 aa).

Disordered stretches follow at residues 1-50 (MDQK…QKME) and 180-214 (RRVRKDGEDEDEMPNGASARSLGQLQSSNPFLSHG). The segment covering 24–34 (SSESPIPTGSE) has biased composition (low complexity). Polar residues predominate over residues 35–44 (CSLNESSDTT). Residues 124 to 183 (RKGGQIRFTNEQTDALEHKFDSHKYLSPQERKKLAKSLSLSERQVKTWFQNRRAKWRRVR) constitute a DNA-binding region (homeobox). Polar residues predominate over residues 200–214 (SLGQLQSSNPFLSHG).

The protein localises to the nucleus. Transcriptional repressor. Involved in pharyngeal development and required for the formation of the pharyngeal isthmus. Plays a role in modulating cytoskeleton in the muscle cells of the isthmus. Regulates expression of the acetylcholinesterase genes ace-1 and ace-2. May regulate its own expression. The chain is Homeobox protein HEX homolog pha-2 from Caenorhabditis elegans.